A 63-amino-acid chain; its full sequence is 2-hydroxymuconate tautomerase (63 aa).

Catalysis depends on proline 2, which acts as the Proton acceptor; via imino nitrogen.

The protein belongs to the 4-oxalocrotonate tautomerase family. As to quaternary structure, homohexamer.

The enzyme catalyses (2Z,4E)-2-hydroxyhexa-2,4-dienedioate = (3E)-2-oxohex-3-enedioate. It functions in the pathway aromatic compound metabolism; salicylate degradation. In terms of biological role, catalyzes the ketonization of 2-hydroxymuconate stereoselectively to yield 2-oxo-3-hexenedioate. The protein is 2-hydroxymuconate tautomerase (tdnL) of Pseudomonas putida (Arthrobacter siderocapsulatus).